The sequence spans 336 residues: Protein-arginine N-acetylglucosaminyltransferase SseK1 (336 aa).

An N-beta-linked (GlcNAc) arginine; by autocatalysis glycan is attached at R24. Residues 50–52 (QWF) and Y74 contribute to the UDP-N-acetyl-alpha-D-glucosamine site. The N-beta-linked (GlcNAc) arginine; by autocatalysis glycan is linked to R152. A DXD motif motif is present at residues 223–225 (DAD). 224–225 (AD) lines the UDP-N-acetyl-alpha-D-glucosamine pocket. D225 provides a ligand contact to Mn(2+). The active-site Proton acceptor is E255. The Mn(2+) site is built by N322 and S324. Residues S324 and S329 each coordinate UDP-N-acetyl-alpha-D-glucosamine. A glycan (N-beta-linked (GlcNAc) arginine; by autocatalysis) is linked at R333.

It belongs to the glycosyltransferase NleB family. Mn(2+) serves as cofactor. Auto-glycosylated: arginine GlcNAcylation is required for activity toward death domain-containing host target proteins.

It localises to the secreted. The protein resides in the host cytoplasm. Its subcellular location is the host cytosol. It catalyses the reaction L-arginyl-[protein] + UDP-N-acetyl-alpha-D-glucosamine = N(omega)-(N-acetyl-beta-D-glucosaminyl)-L-arginyl-[protein] + UDP + H(+). With respect to regulation, protein-arginine N-acetylglucosaminyltransferase activity is inhibited by 100066N compound (flavone analog) and 102644N compound (a substituted isoxazole). Its function is as follows. Protein-arginine N-acetylglucosaminyltransferase effector that disrupts TNF signaling in infected cells, including NF-kappa-B signaling, apoptosis and necroptosis. Acts by catalyzing the transfer of a single N-acetylglucosamine (GlcNAc) to a conserved arginine residue in the death domain of host proteins TRADD and, to a lower extent, FADD: arginine GlcNAcylation prevents homotypic/heterotypic death domain interactions and assembly of the oligomeric TNF-alpha receptor complex, thereby disrupting TNF signaling. Also acts on host proteins without a death domain: catalyzes arginine GlcNAcylation of host GAPDH protein, thereby preventing GAPDH interaction with TRAF2, leading to inhibit NF-kappa-B signaling. Catalyzes GlcNAcylation of host tubulin-folding cofactor TBCB, thereby promoting microtubule stability. Also mediates auto-GlcNAcylation, which is required for activity toward death domain-containing host target proteins. The polypeptide is Protein-arginine N-acetylglucosaminyltransferase SseK1 (Salmonella enteritidis (strain 2009K0958)).